The sequence spans 871 residues: MDSRYNPAAIEEKRQKTWLELGLDKTPSASNKPKFYALSMFPYPSGSLHMGHVRNYTITDVIARFKRMQGYRVIHPMGWDAFGLPAENAAIDRGVPPAKWTYQNITQMRQQLQRLGLSIDWECELATCSPDYYKWTQWIFLQFLQAGLAYQKEAAVNWDPIDQTVLANEQVDNEGRSWRSGAIVERKLLRQWFFKITDYAEELLNDLDKLTGWPERVKLMQANWIGKSTGAYLEFPIVGIDEKIAVYTTRPDTVYGVSYLVLAPEHPLTNRVTTKEQQAAVEVFIKEVSNQSELERTSEDKPKRGIPTGGVAINPFTGEEVPIWIADYVLYEYGTGAVMGVPAHDVRDFKFAKNYDLPINFVIASPDDVAGFDLTPTSEIDGITQLVEVDYKQAYTEPGILINSGAFTGISSTDAKQAIIEYAEKQDFGKVRVQYRLRDWLISRQRYWGAPIPVIHCPNCGIVPVPDKDLPVQLPEEVEFTGRCGSPLTQLESWVNVPCPTCGTPAKRETDTMDTFIDSSWYFLRFPDAKNEQQVFDSSKVNDWMPVNQYVGGIEHAILHLLYSRFFTKVLRDRGLLNFDEPFQRLLTQGMVQGLTYLNPNKGGKDKWIPSNLVNSADPRDPQTDEPLQRLYATMSKSKGNGVAPEDVISKYGIDTARMFILFKAPPEKDLEWDEADVEGQFRFLNRVWRLVTDYITAGVSRKKAQSDLTKAEKELRRAIHTAIQAVTEDVEDEYQFNTAISELMKLSNALSDADKNSPIYAEGIRTLVILIAPFAPHIADELWHLLGESDSIHTQTWPSFDPAALVADEITLVIQVMGKTRGAIQVPAQADKAALEKYARESEIAQRYIEGKEIKKVIVVPGKLVNFVVS.

The 'HIGH' region motif lies at 42-52 (PYPSGSLHMGH). Residues 634–638 (TMSKS) carry the 'KMSKS' region motif. An ATP-binding site is contributed by Lys-637.

This sequence belongs to the class-I aminoacyl-tRNA synthetase family.

The protein localises to the cytoplasm. It catalyses the reaction tRNA(Leu) + L-leucine + ATP = L-leucyl-tRNA(Leu) + AMP + diphosphate. This is Leucine--tRNA ligase from Nostoc punctiforme (strain ATCC 29133 / PCC 73102).